The chain runs to 126 residues: Anti-adapter protein IraD (126 aa).

This sequence belongs to the GpW/Gp25 family. IraD subfamily. As to quaternary structure, interacts with RssB.

It is found in the cytoplasm. In terms of biological role, inhibits RpoS proteolysis by regulating RssB activity, thereby increasing the stability of the sigma stress factor RpoS during oxidative stress. Its effect on RpoS stability is due to its interaction with RssB, which probably blocks the interaction of RssB with RpoS, and the consequent delivery of the RssB-RpoS complex to the ClpXP protein degradation pathway. This Salmonella paratyphi A (strain ATCC 9150 / SARB42) protein is Anti-adapter protein IraD.